The sequence spans 363 residues: Lipoyl synthase (363 aa).

Residues cysteine 55, cysteine 60, cysteine 66, cysteine 81, cysteine 85, cysteine 88, and serine 292 each coordinate [4Fe-4S] cluster. Positions 67–281 (WESREATFLI…SKLAKELGFG (215 aa)) constitute a Radical SAM core domain. Residues 338-363 (PSEETPVTTRMAKTPAQSNSVAATIR) are disordered. The span at 352 to 363 (PAQSNSVAATIR) shows a compositional bias: polar residues.

Belongs to the radical SAM superfamily. Lipoyl synthase family. [4Fe-4S] cluster is required as a cofactor.

The protein resides in the cytoplasm. The enzyme catalyses [[Fe-S] cluster scaffold protein carrying a second [4Fe-4S](2+) cluster] + N(6)-octanoyl-L-lysyl-[protein] + 2 oxidized [2Fe-2S]-[ferredoxin] + 2 S-adenosyl-L-methionine + 4 H(+) = [[Fe-S] cluster scaffold protein] + N(6)-[(R)-dihydrolipoyl]-L-lysyl-[protein] + 4 Fe(3+) + 2 hydrogen sulfide + 2 5'-deoxyadenosine + 2 L-methionine + 2 reduced [2Fe-2S]-[ferredoxin]. It participates in protein modification; protein lipoylation via endogenous pathway; protein N(6)-(lipoyl)lysine from octanoyl-[acyl-carrier-protein]: step 2/2. Catalyzes the radical-mediated insertion of two sulfur atoms into the C-6 and C-8 positions of the octanoyl moiety bound to the lipoyl domains of lipoate-dependent enzymes, thereby converting the octanoylated domains into lipoylated derivatives. This is Lipoyl synthase from Corynebacterium aurimucosum (strain ATCC 700975 / DSM 44827 / CIP 107346 / CN-1) (Corynebacterium nigricans).